We begin with the raw amino-acid sequence, 87 residues long: Large ribosomal subunit protein bL27 (87 aa).

This sequence belongs to the bacterial ribosomal protein bL27 family.

This Renibacterium salmoninarum (strain ATCC 33209 / DSM 20767 / JCM 11484 / NBRC 15589 / NCIMB 2235) protein is Large ribosomal subunit protein bL27.